An 802-amino-acid chain; its full sequence is MSFNHQEIEKKWQGYWEENKTFRTPDETEKPKFYALDMFPYPSGAGLHVGHPEGYTATDILSRMKRMQGYNVLHPMGWDAFGLPAEQYALDTGNSPAEFTEHNINTFRNQIKSLGFSYDWDREVNTTDPNYYKWTQWIFLKLFEKGLAYVDEVPVNWCPALGTVLANEEIIDGKSERGGHPVERRPMRQWMLKITAYGDRLLEDLDELDWPESLKDMQRNWIGRSEGAEVHFNIDGTDEKFTVFTTRPDTLFGASYCVLAPEHALVADITTADQKEAVEAYINSVKMKSDLERTELAKEKTGVFTGAYAVNPVNGEKLPIWIADYVLATYGTGAVMAVPAHDERDYEFASTFNLPMKEVVKGGDITKEAYTGDGAHVNSAFLDGLNKEEAIAKMIEWLEVTSAGNQKVTYRLRDWLFSRQRYWGEPIPVIHWEDGTMTAVKEEELPLVLPKTENIRPSGTGESPLANIDEWVNVVDPETGKKGRRETNTMPQWAGSCWYYLRYIDPNNSEALVDPEKVKQWLPVDIYIGGAEHAVLHLLYARFWHKVLYDIGVVPTKEPFQQLFNQGMILGENNEKMSKSKGNVVNPDDIVASHGADTLRLYEMFMGPLDASIAWSENGLDGARRFLDRVWRLFVQDNGELSEKITDAPNKDLEKAYHQTVKKVTEDYAELRFNTAISQMMVFINDAYKAETLPKEYVEGFVKMIAPVAPHIGEELWSKLGYNETITYASWPTFDESKLVEDEVEIVVQVMGKVRAKLTMSKDASKDEMEKLALEAIQDQIEGKTVRKVIVVPGKLVNVVAN.

A 'HIGH' region motif is present at residues 40–51 (PYPSGAGLHVGH). Residues 576-580 (KMSKS) carry the 'KMSKS' region motif. K579 contacts ATP.

It belongs to the class-I aminoacyl-tRNA synthetase family.

It is found in the cytoplasm. The enzyme catalyses tRNA(Leu) + L-leucine + ATP = L-leucyl-tRNA(Leu) + AMP + diphosphate. This is Leucine--tRNA ligase from Bacillus anthracis (strain A0248).